Consider the following 274-residue polypeptide: NAD-dependent protein deacetylase (274 aa).

One can recognise a Deacetylase sirtuin-type domain in the interval 1–274 (MDSRMSDLQA…CDEVLAEVVP (274 aa)). NAD(+) contacts are provided by residues 26 to 46 (GAGC…GQWK) and 104 to 107 (QNVD). Catalysis depends on His-122, which acts as the Proton acceptor. 4 residues coordinate Zn(2+): Cys-130, Cys-133, Cys-181, and Cys-184. NAD(+) is bound by residues 221–223 (GSS), 247–249 (NLG), and Cys-265.

The protein belongs to the sirtuin family. Class II subfamily. Zn(2+) is required as a cofactor.

It is found in the cytoplasm. It catalyses the reaction N(6)-acetyl-L-lysyl-[protein] + NAD(+) + H2O = 2''-O-acetyl-ADP-D-ribose + nicotinamide + L-lysyl-[protein]. Its function is as follows. NAD-dependent protein deacetylase which modulates the activities of several enzymes which are inactive in their acetylated form. This chain is NAD-dependent protein deacetylase, found in Bordetella pertussis (strain Tohama I / ATCC BAA-589 / NCTC 13251).